The following is a 234-amino-acid chain: Sugar fermentation stimulation protein homolog (234 aa).

It belongs to the SfsA family.

The polypeptide is Sugar fermentation stimulation protein homolog (Enterobacter sp. (strain 638)).